The sequence spans 277 residues: Large ribosomal subunit protein uL2 (277 aa).

Disordered regions lie at residues 32–58 (KSLT…RGGG) and 225–277 (VAMN…RRNK). Residues 258 to 277 (YKTRKKKRYSDKFIIKRRNK) show a composition bias toward basic residues.

The protein belongs to the universal ribosomal protein uL2 family. Part of the 50S ribosomal subunit. Forms a bridge to the 30S subunit in the 70S ribosome.

Its function is as follows. One of the primary rRNA binding proteins. Required for association of the 30S and 50S subunits to form the 70S ribosome, for tRNA binding and peptide bond formation. It has been suggested to have peptidyltransferase activity; this is somewhat controversial. Makes several contacts with the 16S rRNA in the 70S ribosome. In Borrelia garinii subsp. bavariensis (strain ATCC BAA-2496 / DSM 23469 / PBi) (Borreliella bavariensis), this protein is Large ribosomal subunit protein uL2.